We begin with the raw amino-acid sequence, 241 residues long: Homeobox protein TGIF2LX (241 aa).

2 disordered regions span residues 1–58 (MEAA…GNLP) and 126–209 (TGKD…VSPE). Over residues 21-39 (AKTQSPAQDTSIMSRNNAD) the composition is skewed to polar residues. Positions 48 to 111 (EHKKKRKGNL…INARRRILPD (64 aa)) form a DNA-binding region, homeobox; TALE-type.

This sequence belongs to the TALE/TGIF homeobox family.

The protein localises to the nucleus. Functionally, may have a transcription role in testis. In Gorilla gorilla gorilla (Western lowland gorilla), this protein is Homeobox protein TGIF2LX (TGIF2LX).